Reading from the N-terminus, the 309-residue chain is MSNNMIRLATRQSPLALWQAHYVKTGLEFFHPDLKVILLPMVTQGDNILGTALSKTGGKGLFVKELERAVLDNRADIAVHSIKDMPLYFPEGLGLVAVCEREDPRDAFLSLRYHDVAQLPEGSVVGTSSLRRQCQLYKNYPGIVVRDLRGNVGARLKKLDQGDYDAIVLAVAGLKRLGLENRMTQILRPETSLPAAGQGAIGIECRLDDTVTLQRVATLNHRPSQLKISCERALLKRLEGGCQTPIGSYAEIENDELWLRAFVGAPDGQLIIDGERRGNFDSAEKIGFELANELLSRGAEAILAQLNRQ.

Cysteine 242 carries the post-translational modification S-(dipyrrolylmethanemethyl)cysteine.

It belongs to the HMBS family. As to quaternary structure, monomer. The cofactor is dipyrromethane.

It carries out the reaction 4 porphobilinogen + H2O = hydroxymethylbilane + 4 NH4(+). Its pathway is porphyrin-containing compound metabolism; protoporphyrin-IX biosynthesis; coproporphyrinogen-III from 5-aminolevulinate: step 2/4. Its function is as follows. Tetrapolymerization of the monopyrrole PBG into the hydroxymethylbilane pre-uroporphyrinogen in several discrete steps. The protein is Porphobilinogen deaminase of Hamiltonella defensa subsp. Acyrthosiphon pisum (strain 5AT).